The following is a 213-amino-acid chain: Adenylate kinase (213 aa).

10 to 15 lines the ATP pocket; it reads GAGKGT. An NMP region spans residues 30 to 59; the sequence is AVGDIFRTIIKTSTSEAELINNYVKQGALI. Residues arginine 36, 57-59, 85-88, and glutamine 92 each bind AMP; these read ALI and GYPR. Residues 123–161 are LID; the sequence is GRYSCKNCGKIYNIHFLQPKIEHVCDVCSSSVFDYRKDD. Residue arginine 124 coordinates ATP. 2 residues coordinate Zn(2+): cysteine 127 and cysteine 130. Residue 133 to 134 coordinates ATP; the sequence is IY. The Zn(2+) site is built by cysteine 147 and cysteine 150. Residues arginine 158 and arginine 169 each coordinate AMP. Lysine 197 is an ATP binding site.

It belongs to the adenylate kinase family. As to quaternary structure, monomer.

Its subcellular location is the cytoplasm. It carries out the reaction AMP + ATP = 2 ADP. The protein operates within purine metabolism; AMP biosynthesis via salvage pathway; AMP from ADP: step 1/1. Its function is as follows. Catalyzes the reversible transfer of the terminal phosphate group between ATP and AMP. Plays an important role in cellular energy homeostasis and in adenine nucleotide metabolism. The protein is Adenylate kinase of Rickettsia prowazekii (strain Madrid E).